Consider the following 286-residue polypeptide: Shikimate dehydrogenase (NADP(+)) (286 aa).

Residues 19-21 and T66 contribute to the shikimate site; that span reads SLS. Residue K70 is the Proton acceptor of the active site. Shikimate is bound by residues N91 and D107. NADP(+) contacts are provided by residues 129–133 and L229; that span reads GSGGA. A shikimate-binding site is contributed by Y231. Residue G252 participates in NADP(+) binding.

The protein belongs to the shikimate dehydrogenase family. As to quaternary structure, homodimer.

The catalysed reaction is shikimate + NADP(+) = 3-dehydroshikimate + NADPH + H(+). Its pathway is metabolic intermediate biosynthesis; chorismate biosynthesis; chorismate from D-erythrose 4-phosphate and phosphoenolpyruvate: step 4/7. In terms of biological role, involved in the biosynthesis of the chorismate, which leads to the biosynthesis of aromatic amino acids. Catalyzes the reversible NADPH linked reduction of 3-dehydroshikimate (DHSA) to yield shikimate (SA). The protein is Shikimate dehydrogenase (NADP(+)) of Prochlorococcus marinus (strain MIT 9312).